A 408-amino-acid chain; its full sequence is Multidrug resistance protein MdtG (408 aa).

10 helical membrane passes run 16–36 (LIVAWLGCFLTGAAFSLVMPF), 58–78 (IVFSITFLFSAIASPFWGGLA), 92–112 (LGMGIVMVLMGLAQNIWQFLI), 115–135 (ALLGLLGGFVPNANALIATQV), 146–166 (TLSTGGVSGALLGPMAGGLLA), 173–193 (PVFFITASVLILCFFVTLFCI), 224–244 (LFVTTLIIQVATGSIAPILTL), 256–276 (VAFISGMIASVPGVAALLSAP), 290–310 (ILITALIFSVLLLIPMSYVQT), and 378–398 (AVFLVTAGVVLFNAVYSWNSL).

The protein belongs to the major facilitator superfamily. DHA1 family. MdtG (TC 2.A.1.2.20) subfamily.

It localises to the cell inner membrane. Confers resistance to fosfomycin and deoxycholate. In Escherichia coli O17:K52:H18 (strain UMN026 / ExPEC), this protein is Multidrug resistance protein MdtG.